The primary structure comprises 368 residues: Peptide chain release factor 2 (368 aa).

Position 245 is an N5-methylglutamine (Gln245).

This sequence belongs to the prokaryotic/mitochondrial release factor family. Methylated by PrmC. Methylation increases the termination efficiency of RF2.

The protein resides in the cytoplasm. Functionally, peptide chain release factor 2 directs the termination of translation in response to the peptide chain termination codons UGA and UAA. This Treponema pallidum (strain Nichols) protein is Peptide chain release factor 2 (prfB).